Reading from the N-terminus, the 405-residue chain is Tryptophan synthase beta chain (405 aa).

An N6-(pyridoxal phosphate)lysine modification is found at lysine 98.

It belongs to the TrpB family. In terms of assembly, tetramer of two alpha and two beta chains. Pyridoxal 5'-phosphate is required as a cofactor.

It carries out the reaction (1S,2R)-1-C-(indol-3-yl)glycerol 3-phosphate + L-serine = D-glyceraldehyde 3-phosphate + L-tryptophan + H2O. It participates in amino-acid biosynthesis; L-tryptophan biosynthesis; L-tryptophan from chorismate: step 5/5. Its function is as follows. The beta subunit is responsible for the synthesis of L-tryptophan from indole and L-serine. The protein is Tryptophan synthase beta chain of Xylella fastidiosa (strain M23).